The primary structure comprises 451 residues: Ubiquinone biosynthesis monooxygenase COQ6, mitochondrial (451 aa).

It belongs to the UbiH/COQ6 family. In terms of assembly, component of a multi-subunit COQ enzyme complex. The cofactor is FAD.

It localises to the mitochondrion inner membrane. The enzyme catalyses a 4-hydroxy-3-(all-trans-polyprenyl)benzoate + 2 reduced [2Fe-2S]-[ferredoxin] + O2 + 2 H(+) = a 3,4-dihydroxy-5-(all-trans-polyprenyl)benzoate + 2 oxidized [2Fe-2S]-[ferredoxin] + H2O. The catalysed reaction is a 2-methoxy-6-(all-trans-polyprenyl)phenol + 2 reduced [2Fe-2S]-[ferredoxin] + O2 + 2 H(+) = a 2-methoxy-6-(all-trans-polyprenyl)benzene-1,4-diol + 2 oxidized [2Fe-2S]-[ferredoxin] + H2O. It functions in the pathway cofactor biosynthesis; ubiquinone biosynthesis. Its function is as follows. FAD-dependent monooxygenase required for two non-consecutive steps during ubiquinone biosynthesis. Required for the C5-ring hydroxylation during ubiquinone biosynthesis by catalyzing the hydroxylation of 4-hydroxy-3-(all-trans-polyprenyl)benzoic acid to 3,4-dihydroxy-5-(all-trans-polyprenyl)benzoic acid. Also acts downstream of coq4, for the C1-hydroxylation during ubiquinone biosynthesis by catalyzing the hydroxylation of 2-methoxy-6-(all-trans-polyprenyl)phenol to 2-methoxy-6-(all-trans-polyprenyl)benzene-1,4-diol. The electrons required for the hydroxylation reaction are funneled indirectly to coq-6 from NADPH via a ferredoxin/ferredoxin reductase system. This is Ubiquinone biosynthesis monooxygenase COQ6, mitochondrial from Caenorhabditis elegans.